The primary structure comprises 597 residues: Golgin subfamily A member 8C (597 aa).

Disordered regions lie at residues Met-1–Ser-80 and Lys-96–Glu-120. The span at Thr-38–Gly-50 shows a compositional bias: polar residues. Residues Ser-53–Pro-70 are compositionally biased toward low complexity. Coiled-coil stretches lie at residues Arg-81–Leu-141, Glu-199–Val-255, and Ser-296–Leu-394. The segment covering Lys-100–Glu-120 has biased composition (basic and acidic residues). 3 disordered regions span residues Leu-390 to Met-422, Pro-457 to Ala-498, and Pro-549 to Pro-576. Over residues Pro-470 to Gly-483 the composition is skewed to gly residues. The segment covering Glu-553–Pro-563 has biased composition (basic and acidic residues).

Belongs to the GOLGA8 family.

This is Golgin subfamily A member 8C (GOLGA8CP) from Homo sapiens (Human).